The chain runs to 217 residues: Response regulator RR06 (217 aa).

The Response regulatory domain occupies 2–115 (NILVADDEEM…LLVKRIKALI (114 aa)). D51 carries the post-translational modification 4-aspartylphosphate. Residues 122–217 (EDIWRYQDVT…VKNVGYKISL (96 aa)) constitute a DNA-binding region (ompR/PhoB-type).

Phosphorylated at threonine residues by StkP; threonine phosphorylation enhances RR06 binding to DNA and may also increase expression of CbpA. May be de-phosphorylated by PhpP.

In terms of biological role, member of the two-component regulatory system HK06/RR06 involved in regulation of target genes, including choline-binding protein CbpA. Binds to the promoter region of CbpA and directly activates transcription. The polypeptide is Response regulator RR06 (Streptococcus pneumoniae serotype 2 (strain D39 / NCTC 7466)).